A 598-amino-acid polypeptide reads, in one-letter code: Aspartate--tRNA(Asp/Asn) ligase (598 aa).

An L-aspartate-binding site is contributed by Glu-175. The interval 199-202 is aspartate; it reads QQFK. L-aspartate-binding residues include Arg-221 and His-452. 221–223 serves as a coordination point for ATP; the sequence is RDE. Glu-486 serves as a coordination point for ATP. Arg-493 provides a ligand contact to L-aspartate. ATP is bound at residue 538–541; it reads GVDR.

This sequence belongs to the class-II aminoacyl-tRNA synthetase family. Type 1 subfamily. As to quaternary structure, homodimer.

It localises to the cytoplasm. It carries out the reaction tRNA(Asx) + L-aspartate + ATP = L-aspartyl-tRNA(Asx) + AMP + diphosphate. Its function is as follows. Aspartyl-tRNA synthetase with relaxed tRNA specificity since it is able to aspartylate not only its cognate tRNA(Asp) but also tRNA(Asn). Reaction proceeds in two steps: L-aspartate is first activated by ATP to form Asp-AMP and then transferred to the acceptor end of tRNA(Asp/Asn). This chain is Aspartate--tRNA(Asp/Asn) ligase, found in Gluconobacter oxydans (strain 621H) (Gluconobacter suboxydans).